Here is a 283-residue protein sequence, read N- to C-terminus: MAFQGTSRTLTQQSSAATSDELQKILFSPEAIKKMATECDLGRHHWMRADNAISVRPLVPEVTHGRIASFFKSGYDAGELSSKGYMSVPQVLCAVTRTVSTDAEGSLRIYLADLGDKELSPIDGQCVTLHNHDLPALVSFQPTYDCPMETVGNRKRCFAVVIERHGYIGYTGTTASVCSNWQARFSSKNNNYTHIAAGKTLVLPFNRLAEQTKPSAVARLLKSQLNNIESSQYVLTNAKINQNARSESEELNVESPPIAIGSSSASRSETFRPQVVNGTLVFS.

The protein belongs to the cucumovirus movement protein family.

It localises to the host cell junction. The protein resides in the host plasmodesma. In terms of biological role, transports viral genome to neighboring plant cells directly through plasmosdesmata, without any budding. The movement protein allows efficient cell to cell propagation, by bypassing the host cell wall barrier. Acts by forming a tubular structure at the host plasmodesmata, enlarging it enough to allow free passage of virion capsids. This is Movement protein from Cucumis sativus (Cucumber).